A 506-amino-acid polypeptide reads, in one-letter code: Anaerobic nitric oxide reductase transcription regulator NorR (506 aa).

Asp-57 is modified (4-aspartylphosphate). The Sigma-54 factor interaction domain occupies 187–416; sequence MIGLSPAMTQ…LEHAIHRAVV (230 aa). ATP contacts are provided by residues 215–222 and 278–287; these read GETGTGKE and ADNGTLFLDE. A DNA-binding region (H-T-H motif) is located at residues 481–500; the sequence is WAASARALETDVANLHRLAK.

Its pathway is nitrogen metabolism; nitric oxide reduction. Functionally, required for the expression of anaerobic nitric oxide (NO) reductase, acts as a transcriptional activator for at least the norVW operon. Activation also requires sigma-54. In Salmonella gallinarum (strain 287/91 / NCTC 13346), this protein is Anaerobic nitric oxide reductase transcription regulator NorR.